We begin with the raw amino-acid sequence, 474 residues long: tRNA-2-methylthio-N(6)-dimethylallyladenosine synthase (474 aa).

One can recognise an MTTase N-terminal domain in the interval 3-120 (KKLHIKTWGC…LPEMINHVQG (118 aa)). [4Fe-4S] cluster-binding residues include Cys-12, Cys-49, Cys-83, Cys-157, Cys-161, and Cys-164. The Radical SAM core domain maps to 143-375 (RADGPTAFVS…QDRITKQAMR (233 aa)). The TRAM domain maps to 378 to 441 (RLMLGTVQRI…TNSLRGIVVR (64 aa)).

Belongs to the methylthiotransferase family. MiaB subfamily. In terms of assembly, monomer. Requires [4Fe-4S] cluster as cofactor.

It localises to the cytoplasm. The enzyme catalyses N(6)-dimethylallyladenosine(37) in tRNA + (sulfur carrier)-SH + AH2 + 2 S-adenosyl-L-methionine = 2-methylsulfanyl-N(6)-dimethylallyladenosine(37) in tRNA + (sulfur carrier)-H + 5'-deoxyadenosine + L-methionine + A + S-adenosyl-L-homocysteine + 2 H(+). In terms of biological role, catalyzes the methylthiolation of N6-(dimethylallyl)adenosine (i(6)A), leading to the formation of 2-methylthio-N6-(dimethylallyl)adenosine (ms(2)i(6)A) at position 37 in tRNAs that read codons beginning with uridine. This chain is tRNA-2-methylthio-N(6)-dimethylallyladenosine synthase, found in Pectobacterium atrosepticum (strain SCRI 1043 / ATCC BAA-672) (Erwinia carotovora subsp. atroseptica).